We begin with the raw amino-acid sequence, 40 residues long: Photosystem II reaction center protein J (40 aa).

The chain crosses the membrane as a helical span at residues 8–28 (IPLWIIGTVAGILVIGLVGIF).

The protein belongs to the PsbJ family. PSII is composed of 1 copy each of membrane proteins PsbA, PsbB, PsbC, PsbD, PsbE, PsbF, PsbH, PsbI, PsbJ, PsbK, PsbL, PsbM, PsbT, PsbX, PsbY, PsbZ, Psb30/Ycf12, at least 3 peripheral proteins of the oxygen-evolving complex and a large number of cofactors. It forms dimeric complexes.

The protein resides in the plastid. The protein localises to the chloroplast thylakoid membrane. Functionally, one of the components of the core complex of photosystem II (PSII). PSII is a light-driven water:plastoquinone oxidoreductase that uses light energy to abstract electrons from H(2)O, generating O(2) and a proton gradient subsequently used for ATP formation. It consists of a core antenna complex that captures photons, and an electron transfer chain that converts photonic excitation into a charge separation. This Spinacia oleracea (Spinach) protein is Photosystem II reaction center protein J.